A 630-amino-acid polypeptide reads, in one-letter code: Adagio-like protein 3 (630 aa).

The 73-residue stretch at Glu54–Glu126 folds into the PAS domain. The residue at position 102 (Cys102) is an S-4a-FMN cysteine. Residues Tyr220 to Cys268 form the F-box domain. 5 Kelch repeats span residues Ser380 to Asp430, Ser432 to Gly483, Thr485 to His537, Gly545 to Gly597, and Thr599 to Asp629.

Belongs to the ADAGIO family. In terms of processing, FMN binds covalently to cysteine after exposure to blue light and is reversed in the dark.

The protein resides in the nucleus. It participates in protein modification; protein ubiquitination. Its function is as follows. Component of an E3 ubiquitin ligase complex that plays a central role in blue light-dependent circadian cycles. Acts as a blue light photoreceptor, due to the presence of FMN, that mediates light-regulated protein degradation of critical clock components by targeting them to the proteasome complex. The SCF(ADO3) E3 ubiquitin ligase complex is involved in the regulation of circadian clock-dependent processes including transition to flowering time, hypocotyl elongation, cotyledons and leaf movement rhythms. This is Adagio-like protein 3 from Oryza sativa subsp. japonica (Rice).